Consider the following 144-residue polypeptide: Fluoride-specific ion channel FluC (144 aa).

The next 4 membrane-spanning stretches (helical) occupy residues 7-27 (LIVM…SVAA), 33-53 (FIPW…IGFF), 71-91 (LFVM…SLQT), and 105-125 (VNVA…HITA). Na(+)-binding residues include glycine 79 and threonine 82.

Belongs to the fluoride channel Fluc/FEX (TC 1.A.43) family.

It localises to the cell inner membrane. It catalyses the reaction fluoride(in) = fluoride(out). Its activity is regulated as follows. Na(+) is not transported, but it plays an essential structural role and its presence is essential for fluoride channel function. Fluoride-specific ion channel. Important for reducing fluoride concentration in the cell, thus reducing its toxicity. The polypeptide is Fluoride-specific ion channel FluC (Gluconobacter oxydans (strain 621H) (Gluconobacter suboxydans)).